The following is a 468-amino-acid chain: ATP synthase subunit beta (468 aa).

153 to 160 (GGAGVGKT) provides a ligand contact to ATP.

It belongs to the ATPase alpha/beta chains family. As to quaternary structure, F-type ATPases have 2 components, CF(1) - the catalytic core - and CF(0) - the membrane proton channel. CF(1) has five subunits: alpha(3), beta(3), gamma(1), delta(1), epsilon(1). CF(0) has three main subunits: a(1), b(2) and c(9-12). The alpha and beta chains form an alternating ring which encloses part of the gamma chain. CF(1) is attached to CF(0) by a central stalk formed by the gamma and epsilon chains, while a peripheral stalk is formed by the delta and b chains.

The protein resides in the cell inner membrane. It carries out the reaction ATP + H2O + 4 H(+)(in) = ADP + phosphate + 5 H(+)(out). Its function is as follows. Produces ATP from ADP in the presence of a proton gradient across the membrane. The catalytic sites are hosted primarily by the beta subunits. This is ATP synthase subunit beta from Nautilia profundicola (strain ATCC BAA-1463 / DSM 18972 / AmH).